The sequence spans 216 residues: Somatotropin (216 aa).

Positions 1–25 (MAPGSWFSPLFITVITLGLQWPQEA) are cleaved as a signal peptide. His46 serves as a coordination point for Zn(2+). Cys78 and Cys189 are disulfide-bonded. Glu198 provides a ligand contact to Zn(2+). Cysteines 206 and 214 form a disulfide.

Belongs to the somatotropin/prolactin family.

The protein resides in the secreted. Its function is as follows. Growth hormone plays an important role in growth control. This is Somatotropin (GH) from Anas platyrhynchos (Mallard).